A 278-amino-acid chain; its full sequence is Tryptophan synthase alpha chain (278 aa).

Residues Glu-50 and Asp-61 each act as proton acceptor in the active site.

This sequence belongs to the TrpA family. As to quaternary structure, tetramer of two alpha and two beta chains.

The catalysed reaction is (1S,2R)-1-C-(indol-3-yl)glycerol 3-phosphate + L-serine = D-glyceraldehyde 3-phosphate + L-tryptophan + H2O. Its pathway is amino-acid biosynthesis; L-tryptophan biosynthesis; L-tryptophan from chorismate: step 5/5. Its function is as follows. The alpha subunit is responsible for the aldol cleavage of indoleglycerol phosphate to indole and glyceraldehyde 3-phosphate. This chain is Tryptophan synthase alpha chain, found in Rhodopseudomonas palustris (strain BisB5).